The chain runs to 247 residues: Small ribosomal subunit protein uS2 (247 aa).

Belongs to the universal ribosomal protein uS2 family.

This is Small ribosomal subunit protein uS2 from Cupriavidus pinatubonensis (strain JMP 134 / LMG 1197) (Cupriavidus necator (strain JMP 134)).